A 287-amino-acid chain; its full sequence is Nucleotide-binding protein HD_0584 (287 aa).

Gly8–Ser15 provides a ligand contact to ATP. Position 56 to 59 (Asp56 to Asn59) interacts with GTP.

The protein belongs to the RapZ-like family.

Its function is as follows. Displays ATPase and GTPase activities. The protein is Nucleotide-binding protein HD_0584 of Haemophilus ducreyi (strain 35000HP / ATCC 700724).